The chain runs to 26 residues: Aldehyde dehydrogenase beta chain (26 aa).

Heterotrimer composed of an alpha, a beta and a gamma chain. The cofactor is FAD.

The enzyme catalyses an aldehyde + a quinone + H2O = a quinol + a carboxylate + H(+). This is Aldehyde dehydrogenase beta chain from Amycolatopsis methanolica.